Here is a 491-residue protein sequence, read N- to C-terminus: Protein nucleotidyltransferase YdiU (491 aa).

Residues Gly94, Gly96, Arg97, Lys117, Asp129, Gly130, Arg180, and Arg187 each coordinate ATP. The active-site Proton acceptor is Asp256. The Mg(2+) site is built by Asn257 and Asp266. Residue Asp266 coordinates ATP.

It belongs to the SELO family. Mg(2+) is required as a cofactor. Requires Mn(2+) as cofactor.

The enzyme catalyses L-seryl-[protein] + ATP = 3-O-(5'-adenylyl)-L-seryl-[protein] + diphosphate. The catalysed reaction is L-threonyl-[protein] + ATP = 3-O-(5'-adenylyl)-L-threonyl-[protein] + diphosphate. It carries out the reaction L-tyrosyl-[protein] + ATP = O-(5'-adenylyl)-L-tyrosyl-[protein] + diphosphate. It catalyses the reaction L-histidyl-[protein] + UTP = N(tele)-(5'-uridylyl)-L-histidyl-[protein] + diphosphate. The enzyme catalyses L-seryl-[protein] + UTP = O-(5'-uridylyl)-L-seryl-[protein] + diphosphate. The catalysed reaction is L-tyrosyl-[protein] + UTP = O-(5'-uridylyl)-L-tyrosyl-[protein] + diphosphate. Its function is as follows. Nucleotidyltransferase involved in the post-translational modification of proteins. It can catalyze the addition of adenosine monophosphate (AMP) or uridine monophosphate (UMP) to a protein, resulting in modifications known as AMPylation and UMPylation. The chain is Protein nucleotidyltransferase YdiU from Brevibacillus brevis (strain 47 / JCM 6285 / NBRC 100599).